Here is a 556-residue protein sequence, read N- to C-terminus: 3-phosphoinositide-dependent protein kinase 1 (556 aa).

Y9 bears the Phosphotyrosine; by SRC and INSR mark. S25 carries the phosphoserine modification. The interval 26–80 is disordered; that stretch reads PSMVRTQTESSTPPGIPGGSRQGPAMDGTAAEPRPGAGSLQHAQPPPQPRKKRPE. Polar residues predominate over residues 28–38; sequence MVRTQTESSTP. In terms of domain architecture, Protein kinase spans 82–342; it reads FKFGKILGEG…YGPLKAHPFF (261 aa). ATP-binding positions include 92–94 and K111; that span reads SFS. A PIF-pocket region spans residues 113–157; it reads LEKRHIIKENKVPYVTRERDVMSRLDHPFFVKLYFTFQDDEKLYF. ATP is bound by residues 160–162 and E166; that span reads SYA. Catalysis depends on D205, which acts as the Proton acceptor. 2 residues coordinate ATP: E209 and D223. Phosphoserine; by autocatalysis is present on S241. The residue at position 304 (K304) is an N6-acetyllysine. Residue T354 is modified to Phosphothreonine; by MELK. 2 positions are modified to phosphotyrosine; by SRC and INSR: Y373 and Y376. Position 393 is a phosphoserine (S393). At S394 the chain carries Phosphoserine; by MAP3K5. Residue S396 is modified to Phosphoserine. At S398 the chain carries Phosphoserine; by MAP3K5. S410 bears the Phosphoserine mark. A PH domain is found at 459–550; the sequence is KMGPVDKRKG…EVWRQRYQSH (92 aa). The residue at position 501 (S501) is a Phosphoserine; by PKC/PRKCQ. At T513 the chain carries Phosphothreonine; by autocatalysis. S529 bears the Phosphoserine; by PKC/PRKCQ mark.

Belongs to the protein kinase superfamily. AGC Ser/Thr protein kinase family. PDPK1 subfamily. Homodimer in its autoinhibited state. Active as monomer. Interacts with NPRL2, PPARG, PAK1, PTK2B, GRB14, PKN1 (via C-terminus), STRAP and IKKB. The Tyr-9 phosphorylated form interacts with SRC, RASA1 and CRK (via their SH2 domains). Interacts with SGK3 in a phosphorylation-dependent manner. The tyrosine-phosphorylated form interacts with PTPN6. The Ser-241 phosphorylated form interacts with YWHAH and YWHAQ. Binds INSR in response to insulin. Interacts (via PH domain) with SMAD3, SMAD4 and SMAD7. Interacts with PKN2; the interaction stimulates PDPK1 autophosphorylation, its PI(3,4,5)P3-dependent kinase activity toward 'Ser-473' of AKT1 but also activates its kinase activity toward PRKCD and PRKCZ. In terms of processing, phosphorylation on Ser-241 in the activation loop is required for full activity. PDPK1 itself can autophosphorylate Ser-241, leading to its own activation. Autophosphorylation is inhibited by the apoptotic C-terminus cleavage product of PKN2. Tyr-9 phosphorylation is critical for stabilization of both PDPK1 and the PDPK1/SRC complex via HSP90-mediated protection of PDPK1 degradation. Angiotensin II stimulates the tyrosine phosphorylation of PDPK1 in vascular smooth muscle in a calcium- and SRC-dependent manner. Phosphorylated on Tyr-9, Tyr-373 and Tyr-376 by INSR in response to insulin. Palmitate negatively regulates autophosphorylation at Ser-241 and palmitate-induced phosphorylation at Ser-529 and Ser-501 by PKC/PRKCQ negatively regulates its ability to phosphorylate PKB/AKT1. Phosphorylation at Thr-354 by MELK partially inhibits kinase activity, the inhibition is cooperatively enhanced by phosphorylation at Ser-394 and Ser-398 by MAP3K5. Post-translationally, autophosphorylated; autophosphorylation is inhibited by the apoptotic C-terminus cleavage product of PKN2. Monoubiquitinated in the kinase domain, deubiquitinated by USP4. As to expression, appears to be expressed ubiquitously. The Tyr-9 phosphorylated form is markedly increased in diseased tissue compared with normal tissue from lung, liver, colon and breast.

Its subcellular location is the cytoplasm. The protein localises to the nucleus. It localises to the cell membrane. The protein resides in the cell junction. It is found in the focal adhesion. It carries out the reaction L-seryl-[protein] + ATP = O-phospho-L-seryl-[protein] + ADP + H(+). The enzyme catalyses L-threonyl-[protein] + ATP = O-phospho-L-threonyl-[protein] + ADP + H(+). Homodimerization regulates its activity by maintaining the kinase in an autoinhibitory conformation. NPRL2 down-regulates its activity by interfering with tyrosine phosphorylation at the Tyr-9, Tyr-373 and Tyr-376 residues. The 14-3-3 protein YWHAQ acts as a negative regulator by association with the residues surrounding the Ser-241 residue. STRAP positively regulates its activity by enhancing its autophosphorylation and by stimulating its dissociation from YWHAQ. SMAD2, SMAD3, SMAD4 and SMAD7 also positively regulate its activity by stimulating its dissociation from YWHAQ. Activated by phosphorylation on Tyr-9, Tyr-373 and Tyr-376 by INSR in response to insulin. In terms of biological role, serine/threonine kinase which acts as a master kinase, phosphorylating and activating a subgroup of the AGC family of protein kinases. Its targets include: protein kinase B (PKB/AKT1, PKB/AKT2, PKB/AKT3), p70 ribosomal protein S6 kinase (RPS6KB1), p90 ribosomal protein S6 kinase (RPS6KA1, RPS6KA2 and RPS6KA3), cyclic AMP-dependent protein kinase (PRKACA), protein kinase C (PRKCD and PRKCZ), serum and glucocorticoid-inducible kinase (SGK1, SGK2 and SGK3), p21-activated kinase-1 (PAK1), TSSK3, protein kinase PKN (PKN1 and PKN2). Plays a central role in the transduction of signals from insulin by providing the activating phosphorylation to PKB/AKT1, thus propagating the signal to downstream targets controlling cell proliferation and survival, as well as glucose and amino acid uptake and storage. Negatively regulates the TGF-beta-induced signaling by: modulating the association of SMAD3 and SMAD7 with TGF-beta receptor, phosphorylating SMAD2, SMAD3, SMAD4 and SMAD7, preventing the nuclear translocation of SMAD3 and SMAD4 and the translocation of SMAD7 from the nucleus to the cytoplasm in response to TGF-beta. Activates PPARG transcriptional activity and promotes adipocyte differentiation. Activates the NF-kappa-B pathway via phosphorylation of IKKB. The tyrosine phosphorylated form is crucial for the regulation of focal adhesions by angiotensin II. Controls proliferation, survival, and growth of developing pancreatic cells. Participates in the regulation of Ca(2+) entry and Ca(2+)-activated K(+) channels of mast cells. Essential for the motility of vascular endothelial cells (ECs) and is involved in the regulation of their chemotaxis. Plays a critical role in cardiac homeostasis by serving as a dual effector for cell survival and beta-adrenergic response. Plays an important role during thymocyte development by regulating the expression of key nutrient receptors on the surface of pre-T cells and mediating Notch-induced cell growth and proliferative responses. Provides negative feedback inhibition to toll-like receptor-mediated NF-kappa-B activation in macrophages. Functionally, catalytically inactive. This chain is 3-phosphoinositide-dependent protein kinase 1 (PDPK1), found in Homo sapiens (Human).